Consider the following 299-residue polypeptide: Hydroxymethylglutaryl-CoA lyase YngG (299 aa).

Residues 7–274 (VTIKEVGPRD…KTNVKLEKLL (268 aa)) enclose the Pyruvate carboxyltransferase domain. Substrate is bound at residue Arg15. The a divalent metal cation site is built by Asp16, His207, and His209. The active site involves Cys240. An a divalent metal cation-binding site is contributed by Asn249.

It belongs to the HMG-CoA lyase family. As to quaternary structure, homodimer and homotetramer.

The catalysed reaction is (3S)-3-hydroxy-3-methylglutaryl-CoA = acetoacetate + acetyl-CoA. Its pathway is metabolic intermediate metabolism; (S)-3-hydroxy-3-methylglutaryl-CoA degradation; acetoacetate from (S)-3-hydroxy-3-methylglutaryl-CoA: step 1/1. In terms of biological role, involved in the catabolism of branched amino acids such as leucine. The polypeptide is Hydroxymethylglutaryl-CoA lyase YngG (yngG) (Bacillus subtilis (strain 168)).